Consider the following 249-residue polypeptide: Type-1Aa cytolytic delta-endotoxin (249 aa).

The protein belongs to the cyt1/cyt2 endotoxin family. Active after proteolytic processing.

Its function is as follows. Kills the larvae of dipteran insects by making pores in the epithelial cell membrane of the insect midgut. Acts on mosquitos and black flies. The chain is Type-1Aa cytolytic delta-endotoxin (cyt1Aa) from Bacillus thuringiensis subsp. morrisoni.